An 83-amino-acid chain; its full sequence is MAHKKGASSSRNGRDSNPQYLGVKKFGGEAVVAGNIIVRQRGTKFHAGKNVGVGKDHTLFALADGNVQFGVRRDRKVVDVVTE.

Positions 1 to 20 are disordered; sequence MAHKKGASSSRNGRDSNPQY. Residues 7–19 show a composition bias toward polar residues; the sequence is ASSSRNGRDSNPQ.

It belongs to the bacterial ribosomal protein bL27 family.

The chain is Large ribosomal subunit protein bL27 from Bifidobacterium animalis subsp. lactis (strain AD011).